A 414-amino-acid polypeptide reads, in one-letter code: Isocitrate dehydrogenase [NADP] cytoplasmic (414 aa).

Ser2 carries the post-translational modification N-acetylserine. The residue at position 42 (Tyr42) is a Phosphotyrosine. Residue 75-77 (TIT) participates in NADP(+) binding. Position 77 (Thr77) interacts with substrate. Residue Lys81 is modified to N6-acetyllysine. Residue Arg82 participates in NADP(+) binding. Residues 94–100 (SPNGTIR) and Arg109 contribute to the substrate site. The residue at position 126 (Lys126) is an N6-succinyllysine. 2 residues coordinate substrate: Arg132 and Lys212. 3 positions are modified to N6-acetyllysine: Lys224, Lys233, and Lys243. A Mn(2+)-binding site is contributed by Asp252. Position 260 (Lys260) interacts with NADP(+). Mn(2+) contacts are provided by Asp275 and Asp279. 310 to 315 (GTVTRH) contributes to the NADP(+) binding site. At Lys321 the chain carries N6-acetyllysine. Residue Asn328 coordinates NADP(+). The residue at position 389 (Ser389) is a Phosphoserine. The residue at position 400 (Lys400) is an N6-succinyllysine.

The protein belongs to the isocitrate and isopropylmalate dehydrogenases family. As to quaternary structure, homodimer. The cofactor is Mg(2+). Mn(2+) serves as cofactor. Post-translationally, the N-terminus is blocked. Acetylation at Lys-374 dramatically reduces catalytic activity. In terms of tissue distribution, ubiquitous.

It localises to the cytoplasm. It is found in the cytosol. The protein resides in the peroxisome. It catalyses the reaction D-threo-isocitrate + NADP(+) = 2-oxoglutarate + CO2 + NADPH. Functionally, catalyzes the NADP(+)-dependent oxidative decarboxylation of isocitrate (D-threo-isocitrate) to 2-ketoglutarate (2-oxoglutarate), which is required by other enzymes such as the phytanoyl-CoA dioxygenase. Plays a critical role in the generation of NADPH, an important cofactor in many biosynthesis pathways. May act as a corneal epithelial crystallin and may be involved in maintaining corneal epithelial transparency. The chain is Isocitrate dehydrogenase [NADP] cytoplasmic (Idh1) from Rattus norvegicus (Rat).